The following is a 95-amino-acid chain: Immunogenic miracidial antigen 8C (95 aa).

Residues 1 to 15 show a composition bias toward polar residues; it reads EFTISFSSPVISTGQ. The segment at 1 to 95 is disordered; sequence EFTISFSSPV…PKKYGSGHKY (95 aa). Acidic residues predominate over residues 20–41; that stretch reads GDEDYHDGDDDVDYTDDVDDVD. Polar residues predominate over residues 45–59; it reads GSPSQLLQGGYQRNQ.

Belongs to the immunogenic miracidial antigen family.

The protein is Immunogenic miracidial antigen 8C (8C) of Schistosoma japonicum (Blood fluke).